The following is a 233-amino-acid chain: Probable dihydroorotate dehydrogenase B (NAD(+)), electron transfer subunit (233 aa).

In terms of domain architecture, FAD-binding FR-type spans 1-87 (MYRVVTIEEV…RGPYGHGFIK (87 aa)). [2Fe-2S] cluster contacts are provided by Cys202, Cys207, Cys210, and Cys218.

This sequence belongs to the PyrK family. As to quaternary structure, heterotetramer of 2 PyrK and 2 PyrD type B subunits. The cofactor is [2Fe-2S] cluster. It depends on FAD as a cofactor.

It functions in the pathway pyrimidine metabolism; UMP biosynthesis via de novo pathway; orotate from (S)-dihydroorotate (NAD(+) route): step 1/1. In terms of biological role, responsible for channeling the electrons from the oxidation of dihydroorotate from the FMN redox center in the PyrD type B subunit to the ultimate electron acceptor NAD(+). The polypeptide is Probable dihydroorotate dehydrogenase B (NAD(+)), electron transfer subunit (Thermococcus kodakarensis (strain ATCC BAA-918 / JCM 12380 / KOD1) (Pyrococcus kodakaraensis (strain KOD1))).